The following is an 804-amino-acid chain: DNA mismatch repair protein MutS (804 aa).

Residue 614–621 (GPNMAGKS) coordinates ATP.

It belongs to the DNA mismatch repair MutS family.

Its function is as follows. This protein is involved in the repair of mismatches in DNA. It is possible that it carries out the mismatch recognition step. This protein has a weak ATPase activity. In Ehrlichia ruminantium (strain Gardel), this protein is DNA mismatch repair protein MutS.